Reading from the N-terminus, the 391-residue chain is UPF0229 protein BAA_0633 (391 aa).

Residues 1 to 16 are compositionally biased toward polar residues; it reads MGEENQPNYTISQENW. 2 disordered regions span residues 1–31 and 80–117; these read MGEE…RHQE and HVGQ…GDAA. Positions 21 to 31 are enriched in basic and acidic residues; sequence KGYDDQQRHQE. Over residues 98–115 the composition is skewed to gly residues; it reads GSGGQKQKGPGKGQGAGD.

It belongs to the UPF0229 family.

This is UPF0229 protein BAA_0633 from Bacillus anthracis (strain A0248).